A 797-amino-acid chain; its full sequence is Striatin-3 (797 aa).

An N-acetylmethionine modification is found at methionine 1. Gly residues-rich tracts occupy residues 1–12 (MDELAGGGGGGP) and 33–43 (GGNGAAGGGGP). The segment at 1-60 (MDELAGGGGGGPAMASPPRQQQGPGGNMSLSPGGNGAAGGGGPPATEGAGPAAGPELSRP) is disordered. Residues 44 to 55 (PATEGAGPAAGP) are compositionally biased toward low complexity. Positions 71 to 79 (YIQHEWARF) are caveolin-binding. Residues 77–136 (ARFEMERAHWEVERAELQARIAFLQGERKGQENLKKDLVRRIKMLEYALKQERAKYHKLK) are a coiled coil. Threonine 150 carries the post-translational modification Phosphothreonine. A calmodulin-binding region spans residues 166–183 (QNSQLTWKQGRQLLRQYL). Serine 202, serine 214, serine 229, serine 257, and serine 335 each carry phosphoserine. A disordered region spans residues 313–336 (DGEGAGEARSSGDGTEWDKDDLSP). WD repeat units lie at residues 478–517 (SHFDGVRALAFHPVEPVLVTASEDHTLKLWNLQKTVPAKK), 531–570 (AHIGPVLSLAISSNGEQCFSGGTDATIQWWNMPSPNVDPY), 584–623 (AHTDAVWGLAYSGIKNQLLSCSADGTVRLWNPQEKLPCIC), 679–718 (QSSNHINRVVSHPTLPVTITAHEDRHIKFFDNKTGKMIHS), 721–760 (AHLDAVTSLAVDPNGIYLMSGSHDCSIRLWNLDSKTCVQE), and 767–796 (KLDESIYDVAFHPSKAYIASAGADALAKVF).

The protein belongs to the WD repeat striatin family. Tetramerizes. Part of the core of STRIPAK complexes composed of PP2A catalytic and scaffolding subunits, the striatins (PP2A regulatory subunits), the striatin-associated proteins MOB4, STRIP1 and STRIP2, PDCD10 and members of the STE20 kinases, such as STK24 and STK26. The STRIPAK complex can be extended by adapter proteins such as SLMAP:SIKE1 or CTTNBP2NL. Interacts with CDC42BPB.

Its subcellular location is the cytoplasm. The protein localises to the membrane. Functionally, calmodulin-binding scaffolding protein which is the center of the striatin-interacting phosphatase and kinase (STRIPAK) complexes. STRIPAK complexes have critical roles in protein (de)phosphorylation and are regulators of multiple signaling pathways including Hippo, MAPK, nuclear receptor and cytoskeleton remodeling. Different types of STRIPAK complexes are involved in a variety of biological processes such as cell growth, differentiation, apoptosis, metabolism and immune regulation. The sequence is that of Striatin-3 (STRN3) from Bos taurus (Bovine).